The primary structure comprises 753 residues: 5-methyltetrahydropteroyltriglutamate--homocysteine methyltransferase (753 aa).

5-methyltetrahydropteroyltri-L-glutamate contacts are provided by residues 17-20 and Lys117; that span reads RELK. L-homocysteine contacts are provided by residues 431-433 and Glu484; that span reads IGS. L-methionine contacts are provided by residues 431–433 and Glu484; that span reads IGS. 5-methyltetrahydropteroyltri-L-glutamate contacts are provided by residues 515-516 and Trp561; that span reads RC. Position 599 (Asp599) interacts with L-homocysteine. Asp599 lines the L-methionine pocket. Glu605 contacts 5-methyltetrahydropteroyltri-L-glutamate. Zn(2+) contacts are provided by His641, Cys643, and Glu665. His694 (proton donor) is an active-site residue. A Zn(2+)-binding site is contributed by Cys726.

The protein belongs to the vitamin-B12 independent methionine synthase family. Zn(2+) serves as cofactor.

The catalysed reaction is 5-methyltetrahydropteroyltri-L-glutamate + L-homocysteine = tetrahydropteroyltri-L-glutamate + L-methionine. It participates in amino-acid biosynthesis; L-methionine biosynthesis via de novo pathway; L-methionine from L-homocysteine (MetE route): step 1/1. Functionally, catalyzes the transfer of a methyl group from 5-methyltetrahydrofolate to homocysteine resulting in methionine formation. The sequence is that of 5-methyltetrahydropteroyltriglutamate--homocysteine methyltransferase from Escherichia coli O139:H28 (strain E24377A / ETEC).